We begin with the raw amino-acid sequence, 464 residues long: Argininosuccinate lyase (464 aa).

Belongs to the lyase 1 family. Argininosuccinate lyase subfamily.

The protein resides in the cytoplasm. It catalyses the reaction 2-(N(omega)-L-arginino)succinate = fumarate + L-arginine. It functions in the pathway amino-acid biosynthesis; L-arginine biosynthesis; L-arginine from L-ornithine and carbamoyl phosphate: step 3/3. This chain is Argininosuccinate lyase, found in Sulfurovum sp. (strain NBC37-1).